Reading from the N-terminus, the 203-residue chain is MRVSSLTVGGYGKEVSWQAVQRASLIRIINPALPHILHDRPALARLHWAAEVTGIGLAASIKPQLTDIMIRKTACSAVALLVLIGATPAFATNGMNLEGYGAKSMAMGGTGSAYDTGNSAVMNNPATLGFMKEGTSEIGFGIRGLHPDISLDNNGITDKSDATVLHALDVLHAPRRTDHLGRRMLAQGAWAPTTATTRRCSLR.

This is an uncharacterized protein from Chlorobium limicola.